Consider the following 187-residue polypeptide: Coiled-coil domain-containing protein 201 (187 aa).

Disordered stretches follow at residues 1–79 and 92–159; these read MEPG…PPAT and KESS…RAAA. Residues 111–131 adopt a coiled-coil conformation; it reads LTQRQRQRQQQQQQQESLRAK. Positions 147–157 are enriched in basic residues; the sequence is GRKRRDPKKRA.

This Homo sapiens (Human) protein is Coiled-coil domain-containing protein 201.